Consider the following 528-residue polypeptide: Sodium-dependent lysophosphatidylcholine symporter 1 (528 aa).

The Cytoplasmic portion of the chain corresponds to 1–37 (MAGGGGAERVRVGAAAAGLLPPSCRQPRRRESRERLS). Residues 38–66 (VCSKLCYAVGGAPYQTTGCALGFFLQIYL) traverse the membrane as a helical segment. Over 67-73 (LDVAQLD) the chain is Extracellular. Residues 74 to 99 (PFYASIILFVGRAWDAITDPMVGFFI) form a helical membrane-spanning segment. Residues 100-109 (SKTPWTRFGR) are Cytoplasmic-facing. Residues 110–129 (LMPWIIFSTPFAVISYFLIW) traverse the membrane as a helical segment. Residues 130-138 (FVPDISTGQ) are Extracellular-facing. Residues 139-161 (VMWYLIFYCIFQTLVTCFHVPYS) form a helical membrane-spanning segment. Topologically, residues 162–176 (ALTMFISREQSERDS) are cytoplasmic. Residues 177-199 (ATAYRMTVEVLGTVLGTAIQGQI) form a helical membrane-spanning segment. The Extracellular portion of the chain corresponds to 200–241 (VGKAVTPCIENPPFLSETNFSVAIRNVNMTHYTGSLADTRNA). An intrachain disulfide couples C207 to C460. 2 N-linked (GlcNAc...) asparagine glycosylation sites follow: N218 and N227. The chain crosses the membrane as a helical span at residues 242–263 (YMVAAGVIGGLYILCAVILSVG). Residues 264-295 (VREKRESSELQSDEPVSFFRGLKLVMNHGAYI) are Cytoplasmic-facing. Residues 296–319 (KLITGFLFTSLAFMLLEGNFALFC) traverse the membrane as a helical segment. Residues 320–328 (TYTLGFRNE) lie on the Extracellular side of the membrane. A helical transmembrane segment spans residues 329-351 (FQNILLAIMLSATLTIPFWQWFL). The Cytoplasmic segment spans residues 352–355 (TRFG). A helical transmembrane segment spans residues 356–376 (KKTAVYVGISSAVPFLITVVV). Residues 377-381 (LDSNL) are Extracellular-facing. The chain crosses the membrane as a helical span at residues 382–404 (VVTYIVAVAAGISVAAAFLLPWS). Residues 405-427 (MLPDVIDDFKLQHPESRGHEAIF) lie on the Cytoplasmic side of the membrane. A helical transmembrane segment spans residues 428–450 (FSFYVFFTKFTSGVSLGISTLSL). Residues 451–467 (DFAGYQTRGCSQPSEVN) are Extracellular-facing. A helical membrane pass occupies residues 468–490 (ITLKLLVSAVPVGLILLGLLLFK). Topologically, residues 491-528 (LYPIDEEKRRENKKALQDLREESNSSSESDSTELANIV) are cytoplasmic. A compositionally biased stretch (basic and acidic residues) spans 503 to 513 (KKALQDLREES). The interval 503–528 (KKALQDLREESNSSSESDSTELANIV) is disordered. Residues 514 to 528 (NSSSESDSTELANIV) show a composition bias toward low complexity.

This sequence belongs to the major facilitator superfamily.

It is found in the cell membrane. It localises to the endoplasmic reticulum membrane. The catalysed reaction is a 1-acyl-sn-glycero-3-phosphocholine(in) + Na(+)(in) = a 1-acyl-sn-glycero-3-phosphocholine(out) + Na(+)(out). It carries out the reaction 1-(4Z,7Z,10Z,13Z,16Z,19Z-docosahexaenoyl)-sn-glycero-3-phosphocholine(in) + Na(+)(in) = 1-(4Z,7Z,10Z,13Z,16Z,19Z-docosahexaenoyl)-sn-glycero-3-phosphocholine(out) + Na(+)(out). It catalyses the reaction 1-(9Z-octadecenoyl)-sn-glycero-3-phosphocholine(in) + Na(+)(in) = 1-(9Z-octadecenoyl)-sn-glycero-3-phosphocholine(out) + Na(+)(out). The enzyme catalyses 1-hexadecanoyl-sn-glycero-3-phosphocholine(in) + Na(+)(in) = 1-hexadecanoyl-sn-glycero-3-phosphocholine(out) + Na(+)(out). The catalysed reaction is a 1-acyl-sn-glycero-3-phosphoethanolamine(in) + Na(+)(in) = a 1-acyl-sn-glycero-3-phosphoethanolamine(out) + Na(+)(out). In terms of biological role, sodium-dependent lysophosphatidylcholine (LPC) symporter, which plays an essential role for blood-brain barrier formation and function. Specifically expressed in endothelium of the blood-brain barrier of micro-vessels and transports LPC into the brain. Transport of LPC is essential because it constitutes the major mechanism by which docosahexaenoic acid (DHA), an omega-3 fatty acid that is essential for normal brain growth and cognitive function, enters the brain. Transports LPC carrying long-chain fatty acids such LPC oleate and LPC palmitate with a minimum acyl chain length of 14 carbons. Does not transport docosahexaenoic acid in unesterified fatty acid. This Gallus gallus (Chicken) protein is Sodium-dependent lysophosphatidylcholine symporter 1.